The chain runs to 187 residues: Elongation factor P (187 aa).

This sequence belongs to the elongation factor P family.

The protein resides in the cytoplasm. Its pathway is protein biosynthesis; polypeptide chain elongation. Involved in peptide bond synthesis. Stimulates efficient translation and peptide-bond synthesis on native or reconstituted 70S ribosomes in vitro. Probably functions indirectly by altering the affinity of the ribosome for aminoacyl-tRNA, thus increasing their reactivity as acceptors for peptidyl transferase. This is Elongation factor P from Ruegeria pomeroyi (strain ATCC 700808 / DSM 15171 / DSS-3) (Silicibacter pomeroyi).